The primary structure comprises 101 residues: NADH-quinone oxidoreductase subunit K (101 aa).

Transmembrane regions (helical) follow at residues 4–24, 30–50, and 61–81; these read LTHY…GIFM, LVLL…FIAF, and IFVF…LAIM.

The protein belongs to the complex I subunit 4L family. As to quaternary structure, NDH-1 is composed of 14 different subunits. Subunits NuoA, H, J, K, L, M, N constitute the membrane sector of the complex.

The protein localises to the cell inner membrane. It catalyses the reaction a quinone + NADH + 5 H(+)(in) = a quinol + NAD(+) + 4 H(+)(out). Functionally, NDH-1 shuttles electrons from NADH, via FMN and iron-sulfur (Fe-S) centers, to quinones in the respiratory chain. The immediate electron acceptor for the enzyme in this species is believed to be ubiquinone. Couples the redox reaction to proton translocation (for every two electrons transferred, four hydrogen ions are translocated across the cytoplasmic membrane), and thus conserves the redox energy in a proton gradient. The protein is NADH-quinone oxidoreductase subunit K of Neisseria meningitidis serogroup B (strain ATCC BAA-335 / MC58).